Reading from the N-terminus, the 163-residue chain is Mediator of RNA polymerase II transcription subunit 10 (163 aa).

Residues 57 to 79 (AAPDPSYVQSPPSRTGLSPADPP) form a disordered region. Residues 63–72 (YVQSPPSRTG) are compositionally biased toward polar residues.

Belongs to the Mediator complex subunit 10 family. As to quaternary structure, component of the Mediator complex.

The protein localises to the nucleus. Component of the Mediator complex, a coactivator involved in the regulated transcription of nearly all RNA polymerase II-dependent genes. Mediator functions as a bridge to convey information from gene-specific regulatory proteins to the basal RNA polymerase II transcription machinery. Mediator is recruited to promoters by direct interactions with regulatory proteins and serves as a scaffold for the assembly of a functional preinitiation complex with RNA polymerase II and the general transcription factors. This Coccidioides immitis (strain RS) (Valley fever fungus) protein is Mediator of RNA polymerase II transcription subunit 10 (NUT2).